The following is a 275-amino-acid chain: Elongation factor Ts (275 aa).

The tract at residues 80–83 (TDFV) is involved in Mg(2+) ion dislocation from EF-Tu.

The protein belongs to the EF-Ts family.

The protein resides in the cytoplasm. Associates with the EF-Tu.GDP complex and induces the exchange of GDP to GTP. It remains bound to the aminoacyl-tRNA.EF-Tu.GTP complex up to the GTP hydrolysis stage on the ribosome. The sequence is that of Elongation factor Ts from Clavibacter michiganensis subsp. michiganensis (strain NCPPB 382).